The following is a 402-amino-acid chain: MRKLTILGATGSIGASTLKVIAQNPQQFSIVALVAGVNVAKMYQLCQQWRPKYAVMATASAASELQGLLKNQAMATEVLYGEEAMCQVAALDDVDTVMAAIVGAAGLLPTMAAVKAGKRVLLANKEALVMSGQLFIDAVAQSGAELMPVDSEHNAIFQCLPTEIQTQLGRCDLSQHGIDHILLTGSGGPFRYSDLATLDSVTPEQAIAHPNWSMGPKISVDSATMMNKGLEYIEAKWLFNTSREQLKVLIHPQSVIHSMVQYQDGSVIAQLGEPDMATPISYAMAYPERVTAGVPALDFTRLQQLTFMEVDFARYPCLQLAMDACFLGQHATTSLNAANEVAVDAFLKRKIRFTDIALINDQVLSKVCATNTQLHCRDLESLLELDTMARHFAHQVLKERQA.

Threonine 10, glycine 11, serine 12, isoleucine 13, glycine 36, asparagine 38, and asparagine 124 together coordinate NADPH. Residue lysine 125 participates in 1-deoxy-D-xylulose 5-phosphate binding. Glutamate 126 contacts NADPH. Mn(2+) is bound at residue aspartate 150. Residues serine 151, glutamate 152, serine 186, and histidine 209 each contribute to the 1-deoxy-D-xylulose 5-phosphate site. A Mn(2+)-binding site is contributed by glutamate 152. Glycine 215 contacts NADPH. Residues serine 222, asparagine 227, lysine 228, and glutamate 231 each contribute to the 1-deoxy-D-xylulose 5-phosphate site. Position 231 (glutamate 231) interacts with Mn(2+).

Belongs to the DXR family. It depends on Mg(2+) as a cofactor. Mn(2+) is required as a cofactor.

It carries out the reaction 2-C-methyl-D-erythritol 4-phosphate + NADP(+) = 1-deoxy-D-xylulose 5-phosphate + NADPH + H(+). The protein operates within isoprenoid biosynthesis; isopentenyl diphosphate biosynthesis via DXP pathway; isopentenyl diphosphate from 1-deoxy-D-xylulose 5-phosphate: step 1/6. In terms of biological role, catalyzes the NADPH-dependent rearrangement and reduction of 1-deoxy-D-xylulose-5-phosphate (DXP) to 2-C-methyl-D-erythritol 4-phosphate (MEP). The sequence is that of 1-deoxy-D-xylulose 5-phosphate reductoisomerase from Vibrio cholerae serotype O1 (strain ATCC 39541 / Classical Ogawa 395 / O395).